A 193-amino-acid chain; its full sequence is MKSGSGPLPRLPGSRLQQRARKQLRDGGVIAYSTESCYGLGCRPLDARAIRRVLAIKARPNHKGLIVIAADFEQIRHLVKPLSAAQRAELARYWPGPYTFLLPASRRVPPALRGRHHKIAVRVTAHGEAAALCRRLGTALVSTSANRAGQQSLKTARACRMAFKDKVLTLPGRIGKRRKPSTIIDLESGRVLR.

A YrdC-like domain is found at 14-193 (SRLQQRARKQ…IDLESGRVLR (180 aa)).

The protein belongs to the SUA5 family. TsaC subfamily.

The protein resides in the cytoplasm. It carries out the reaction L-threonine + hydrogencarbonate + ATP = L-threonylcarbamoyladenylate + diphosphate + H2O. Its function is as follows. Required for the formation of a threonylcarbamoyl group on adenosine at position 37 (t(6)A37) in tRNAs that read codons beginning with adenine. Catalyzes the conversion of L-threonine, HCO(3)(-)/CO(2) and ATP to give threonylcarbamoyl-AMP (TC-AMP) as the acyladenylate intermediate, with the release of diphosphate. In Chromobacterium violaceum (strain ATCC 12472 / DSM 30191 / JCM 1249 / CCUG 213 / NBRC 12614 / NCIMB 9131 / NCTC 9757 / MK), this protein is Threonylcarbamoyl-AMP synthase.